Reading from the N-terminus, the 194-residue chain is MTELVLILVGAILVNNFVLVQFLGLCPFMGVSKRIETAIGLALATTFVLTLAAMCSYLLQRYVLVPLDLEYLRTIGFILVIAVVVQFTEMLVNKTSPLLYRVLGIFLPLITTNCIVLGVALLNANKAGYGFLESGINGFGAGLGFSLVLVLFAAMRERIAIADVPKPFKGAAIGLITAGLMSLAFMGFSGLIKP.

Transmembrane regions (helical) follow at residues 4–24, 39–59, 72–92, 102–122, 135–155, and 172–192; these read LVLI…QFLG, IGLA…SYLL, LRTI…EMLV, VLGI…VALL, GING…FAAM, and AIGL…SGLI.

The protein belongs to the NqrDE/RnfAE family. As to quaternary structure, the complex is composed of six subunits: RnfA, RnfB, RnfC, RnfD, RnfE and RnfG.

Its subcellular location is the cell inner membrane. Part of a membrane-bound complex that couples electron transfer with translocation of ions across the membrane. This Azotobacter vinelandii (strain DJ / ATCC BAA-1303) protein is Ion-translocating oxidoreductase complex subunit A.